Here is a 434-residue protein sequence, read N- to C-terminus: Gamma-glutamyl phosphate reductase (434 aa).

This sequence belongs to the gamma-glutamyl phosphate reductase family.

The protein resides in the cytoplasm. It catalyses the reaction L-glutamate 5-semialdehyde + phosphate + NADP(+) = L-glutamyl 5-phosphate + NADPH + H(+). The protein operates within amino-acid biosynthesis; L-proline biosynthesis; L-glutamate 5-semialdehyde from L-glutamate: step 2/2. In terms of biological role, catalyzes the NADPH-dependent reduction of L-glutamate 5-phosphate into L-glutamate 5-semialdehyde and phosphate. The product spontaneously undergoes cyclization to form 1-pyrroline-5-carboxylate. This is Gamma-glutamyl phosphate reductase from Trichormus variabilis (strain ATCC 29413 / PCC 7937) (Anabaena variabilis).